The chain runs to 349 residues: GMP reductase (349 aa).

Position 108-131 (108-131 (IDFLKIKKIFLLSSELKYICIDVA)) interacts with NADP(+). G181 and G183 together coordinate K(+). C186 acts as the Thioimidate intermediate in catalysis. 216 to 239 (IISDGGCTVSGDIAKAFGGGADFV) is an NADP(+) binding site.

The protein belongs to the IMPDH/GMPR family. GuaC type 1 subfamily. As to quaternary structure, homotetramer.

It catalyses the reaction IMP + NH4(+) + NADP(+) = GMP + NADPH + 2 H(+). Functionally, catalyzes the irreversible NADPH-dependent deamination of GMP to IMP. It functions in the conversion of nucleobase, nucleoside and nucleotide derivatives of G to A nucleotides, and in maintaining the intracellular balance of A and G nucleotides. The sequence is that of GMP reductase from Buchnera aphidicola subsp. Acyrthosiphon pisum (strain 5A).